The following is a 277-amino-acid chain: MGIIKYKPTTNGRRNMTSSDFAEITKTTPEKTLLESQSHTAGRNAHGHITVRHRGGGHKQYYRVIDFKRIKDDIKATVKSIEYDPNRTSNIALIQYPDGIKAYIIAPKGLEVGMIVESGVNADIKVGNALPLANIPDGTLIHNIELKPGKGGQLVRSAGTSAQLLGKEGKYAIVRLTSGETRMILLTCRATVGTVGNGQHELIKIGKAGRKRWMGIRPTVRGSVMNPNDHPHGGGEGKAPIGRPSPMSPWGKKTLGKKTRSSKARSEKLIIRHRKSR.

Residues 220–277 (VRGSVMNPNDHPHGGGEGKAPIGRPSPMSPWGKKTLGKKTRSSKARSEKLIIRHRKSR) are disordered. Residues 254-263 (TLGKKTRSSK) are compositionally biased toward basic residues.

This sequence belongs to the universal ribosomal protein uL2 family. As to quaternary structure, part of the 50S ribosomal subunit. Forms a bridge to the 30S subunit in the 70S ribosome.

In terms of biological role, one of the primary rRNA binding proteins. Required for association of the 30S and 50S subunits to form the 70S ribosome, for tRNA binding and peptide bond formation. It has been suggested to have peptidyltransferase activity; this is somewhat controversial. Makes several contacts with the 16S rRNA in the 70S ribosome. The protein is Large ribosomal subunit protein uL2 of Latilactobacillus sakei subsp. sakei (strain 23K) (Lactobacillus sakei subsp. sakei).